The sequence spans 371 residues: Protein MxiG (371 aa).

The chain crosses the membrane as a helical span at residues 127 to 141 (VFFFFAVIVVLIIIF).

Its subcellular location is the cell inner membrane. It localises to the cell outer membrane. Involved in the secretion of the Ipa antigens. Involved in the intracellular dissemination of Shigella. Part of the Mxi-Spa secretion apparatus. This Shigella flexneri protein is Protein MxiG (mxiG).